Here is a 474-residue protein sequence, read N- to C-terminus: Citrate synthase, mitochondrial (474 aa).

The transit peptide at 1–35 (MASTLRLSTSALRSSTLAGKPVVQSVAFNGLRCYS) directs the protein to the mitochondrion. Residues His310, His356, and Asp411 contribute to the active site.

It belongs to the citrate synthase family.

The protein resides in the mitochondrion matrix. The catalysed reaction is oxaloacetate + acetyl-CoA + H2O = citrate + CoA + H(+). It functions in the pathway carbohydrate metabolism; tricarboxylic acid cycle; isocitrate from oxaloacetate: step 1/2. This Emericella nidulans (strain FGSC A4 / ATCC 38163 / CBS 112.46 / NRRL 194 / M139) (Aspergillus nidulans) protein is Citrate synthase, mitochondrial (citA).